The chain runs to 251 residues: Triosephosphate isomerase (251 aa).

9–11 (NWK) lines the substrate pocket. H95 serves as the catalytic Electrophile. Residue E167 is the Proton acceptor of the active site. Substrate contacts are provided by residues G173, S213, and 234 to 235 (GG). S213 carries the post-translational modification Phosphoserine.

This sequence belongs to the triosephosphate isomerase family. As to quaternary structure, homodimer.

It is found in the cytoplasm. It carries out the reaction D-glyceraldehyde 3-phosphate = dihydroxyacetone phosphate. The protein operates within carbohydrate biosynthesis; gluconeogenesis. Its pathway is carbohydrate degradation; glycolysis; D-glyceraldehyde 3-phosphate from glycerone phosphate: step 1/1. Involved in the gluconeogenesis. Catalyzes stereospecifically the conversion of dihydroxyacetone phosphate (DHAP) to D-glyceraldehyde-3-phosphate (G3P). This is Triosephosphate isomerase from Bacillus cereus (strain G9842).